Here is a 201-residue protein sequence, read N- to C-terminus: Small ribosomal subunit protein eS1 (201 aa).

It belongs to the eukaryotic ribosomal protein eS1 family.

The polypeptide is Small ribosomal subunit protein eS1 (Methanoregula boonei (strain DSM 21154 / JCM 14090 / 6A8)).